The following is a 374-amino-acid chain: Dual-specificity RNA methyltransferase RlmN (374 aa).

Catalysis depends on Glu-94, which acts as the Proton acceptor. Positions 100-339 (EEDRATLCVS…VTIRKTRGDD (240 aa)) constitute a Radical SAM core domain. Cys-107 and Cys-344 are oxidised to a cystine. Cys-114, Cys-118, and Cys-121 together coordinate [4Fe-4S] cluster. S-adenosyl-L-methionine is bound by residues 168 to 169 (GE), Ser-200, 222 to 224 (SLH), and Asn-301. Cys-344 serves as the catalytic S-methylcysteine intermediate.

This sequence belongs to the radical SAM superfamily. RlmN family. Requires [4Fe-4S] cluster as cofactor.

The protein resides in the cytoplasm. The enzyme catalyses adenosine(2503) in 23S rRNA + 2 reduced [2Fe-2S]-[ferredoxin] + 2 S-adenosyl-L-methionine = 2-methyladenosine(2503) in 23S rRNA + 5'-deoxyadenosine + L-methionine + 2 oxidized [2Fe-2S]-[ferredoxin] + S-adenosyl-L-homocysteine. It catalyses the reaction adenosine(37) in tRNA + 2 reduced [2Fe-2S]-[ferredoxin] + 2 S-adenosyl-L-methionine = 2-methyladenosine(37) in tRNA + 5'-deoxyadenosine + L-methionine + 2 oxidized [2Fe-2S]-[ferredoxin] + S-adenosyl-L-homocysteine. Specifically methylates position 2 of adenine 2503 in 23S rRNA and position 2 of adenine 37 in tRNAs. m2A2503 modification seems to play a crucial role in the proofreading step occurring at the peptidyl transferase center and thus would serve to optimize ribosomal fidelity. The chain is Dual-specificity RNA methyltransferase RlmN from Vibrio vulnificus (strain CMCP6).